A 188-amino-acid chain; its full sequence is ATP synthase subunit delta (188 aa).

It belongs to the ATPase delta chain family. F-type ATPases have 2 components, F(1) - the catalytic core - and F(0) - the membrane proton channel. F(1) has five subunits: alpha(3), beta(3), gamma(1), delta(1), epsilon(1). F(0) has three main subunits: a(1), b(2) and c(10-14). The alpha and beta chains form an alternating ring which encloses part of the gamma chain. F(1) is attached to F(0) by a central stalk formed by the gamma and epsilon chains, while a peripheral stalk is formed by the delta and b chains.

The protein resides in the cell inner membrane. Its function is as follows. F(1)F(0) ATP synthase produces ATP from ADP in the presence of a proton or sodium gradient. F-type ATPases consist of two structural domains, F(1) containing the extramembraneous catalytic core and F(0) containing the membrane proton channel, linked together by a central stalk and a peripheral stalk. During catalysis, ATP synthesis in the catalytic domain of F(1) is coupled via a rotary mechanism of the central stalk subunits to proton translocation. In terms of biological role, this protein is part of the stalk that links CF(0) to CF(1). It either transmits conformational changes from CF(0) to CF(1) or is implicated in proton conduction. This chain is ATP synthase subunit delta, found in Sinorhizobium fredii (strain NBRC 101917 / NGR234).